The following is an 86-amino-acid chain: uncharacterized protein (86 aa).

4Fe-4S ferredoxin-type domains are found at residues 1-29 (MALLITSKCTNCDMCLPECPNEAISIGDE) and 31-65 (YVIDPILCTECVGHYDTPTCQKVCPITNCIKPDPE). Positions 9, 12, 15, 19, 38, 41, 50, and 54 each coordinate [4Fe-4S] cluster.

Requires [4Fe-4S] cluster as cofactor.

This is an uncharacterized protein from Haemophilus influenzae (strain ATCC 51907 / DSM 11121 / KW20 / Rd).